Here is a 475-residue protein sequence, read N- to C-terminus: MSPQTETRTGTGFKAGVKDYRLTYYTPDYVTKETDILAAFRMTPQPGVPPEEAGAAVAAESSTGTWTTVWTDGLTSLDRYKGRCYDIEPVAGEDNQYIAYVAYPLDLFEEGSVTNLFTSIVGNVFGFKALRALRLEDLRIPPAYVKTFQGPPHGIQVERDKLNKYGRPLLGCTIKPKLGLSAKNYGRAVYECLRGGLDFTKDDENVNSQPFMRWRDRFLFCAEAIYKAQAETGEIKGHYLNATAGTCEEMLKRAEYAKELGVPIVMHDYLTGGFTANTSLSHYCRDNGLLLHIHRAMHAVIDRQRNHGIHFRVLAKALRMSGGDHIHSGTVVGKLEGEREVTLGFVDLLRDDYIEKDRSRGIYFTQDWVSLPGVLPVASGGIHVWHMPALTEIFGDDSVLQFGGGTLGHPWGNAPGAVANRVALEACVQARNEGRDLAREGNNIIREAAKFSPELAAACEVWKEIKFEFETIDTL.

Residues 1–2 (MS) constitute a propeptide that is removed on maturation. Pro-3 carries the post-translational modification N-acetylproline. Lys-14 bears the N6,N6,N6-trimethyllysine mark. Positions 123 and 173 each coordinate substrate. The active-site Proton acceptor is the Lys-175. Lys-177 serves as a coordination point for substrate. Residues Lys-201, Asp-203, and Glu-204 each coordinate Mg(2+). Lys-201 bears the N6-carboxylysine mark. His-294 serves as the catalytic Proton acceptor. Substrate contacts are provided by Arg-295, His-327, and Ser-379.

It belongs to the RuBisCO large chain family. Type I subfamily. As to quaternary structure, heterohexadecamer of 8 large chains and 8 small chains; disulfide-linked. The disulfide link is formed within the large subunit homodimers. Mg(2+) serves as cofactor. Post-translationally, the disulfide bond which can form in the large chain dimeric partners within the hexadecamer appears to be associated with oxidative stress and protein turnover.

It is found in the plastid. It localises to the chloroplast. It catalyses the reaction 2 (2R)-3-phosphoglycerate + 2 H(+) = D-ribulose 1,5-bisphosphate + CO2 + H2O. The enzyme catalyses D-ribulose 1,5-bisphosphate + O2 = 2-phosphoglycolate + (2R)-3-phosphoglycerate + 2 H(+). RuBisCO catalyzes two reactions: the carboxylation of D-ribulose 1,5-bisphosphate, the primary event in carbon dioxide fixation, as well as the oxidative fragmentation of the pentose substrate in the photorespiration process. Both reactions occur simultaneously and in competition at the same active site. This is Ribulose bisphosphate carboxylase large chain from Chlorokybus atmophyticus (Soil alga).